We begin with the raw amino-acid sequence, 301 residues long: Phosphate transport system permease protein PstA 2 (301 aa).

Transmembrane regions (helical) follow at residues 36-56 (ACVCCLAVVITPTLWMLIGVV), 83-103 (IIGTAVLAIGVILVGGTVSVL), 127-147 (LSGIPSIVLGYVGYLALVVYF), 149-169 (WGFSLAAGVLVLSVMSIPYIA), 209-229 (GIVTGMLVALALAIGETAPLL), and 274-294 (ALLLIVFLLLLIFIGRLINWL). The ABC transmembrane type-1 domain occupies 83-288 (IIGTAVLAIG…VFLLLLIFIG (206 aa)).

It belongs to the binding-protein-dependent transport system permease family. CysTW subfamily.

Its subcellular location is the cell membrane. Part of the binding-protein-dependent transport system for phosphate; probably responsible for the translocation of the substrate across the membrane. This chain is Phosphate transport system permease protein PstA 2 (pstA2), found in Mycobacterium bovis (strain ATCC BAA-935 / AF2122/97).